A 37-amino-acid chain; its full sequence is Natriuretic peptide PNP (37 aa).

The cysteines at positions 14 and 30 are disulfide-linked.

In terms of tissue distribution, expressed by the venom gland.

Its subcellular location is the secreted. In terms of biological role, increases urine flow and decreases blood pressure when administered to rats by intravenous injection. Inhibits thrombin-induced platelet aggregation. Stimulates cGMP production via the natriuretic peptide receptor-A (NPR1). The protein is Natriuretic peptide PNP of Pseudocerastes persicus (Persian horned viper).